The following is a 409-amino-acid chain: Arginine deiminase (409 aa).

The active-site Amidino-cysteine intermediate is cysteine 398.

Belongs to the arginine deiminase family.

Its subcellular location is the cytoplasm. It carries out the reaction L-arginine + H2O = L-citrulline + NH4(+). It functions in the pathway amino-acid degradation; L-arginine degradation via ADI pathway; carbamoyl phosphate from L-arginine: step 1/2. This is Arginine deiminase from Metamycoplasma arthritidis (strain 158L3-1) (Mycoplasma arthritidis).